The chain runs to 340 residues: MTMSLIAGVAAFVLTVLAMPHFITYYKIKKIGGQQMHEDVKQHLAKAGTPTMGGTVFLVVAILISLIFNFHVFTEGHPAYGATAGILFVILIYGIIGFLDDFLKIFHQINEGLKPWQKMALQIVAGLLFYFIHVLPSGTNSLAIGGLTIQLGVFYVLFVLFWIVGFSNAVNLTDGIDGLASVSVVISLIAYGIIAFVKGELAILTIIITMIGALLGFFVFNHKPAKVFMGDVGSLSLGAMLAVISIALRVEWTLLLIGVVYVLETASVMLQVSYFKYTKRKYGEGRRIFRMTPFHHHLELGGISGKGEKWSEWKVDAFLWTIGALASSITLWMVLGNVMK.

10 helical membrane passes run 3–23 (MSLI…PHFI), 53–73 (GGTV…FHVF), 79–99 (AYGA…IGFL), 119–139 (MALQ…PSGT), 144–164 (IGGL…FWIV), 176–196 (IDGL…IIAF), 200–220 (ELAI…FFVF), 227–247 (VFMG…ISIA), 250–270 (VEWT…SVML), and 315–335 (VDAF…WMVL).

It belongs to the glycosyltransferase 4 family. MraY subfamily. Mg(2+) serves as cofactor.

The protein resides in the cell membrane. The enzyme catalyses UDP-N-acetyl-alpha-D-muramoyl-L-alanyl-gamma-D-glutamyl-L-lysyl-D-alanyl-D-alanine + di-trans,octa-cis-undecaprenyl phosphate = Mur2Ac(oyl-L-Ala-gamma-D-Glu-L-Lys-D-Ala-D-Ala)-di-trans,octa-cis-undecaprenyl diphosphate + UMP. The protein operates within cell wall biogenesis; peptidoglycan biosynthesis. Its function is as follows. Catalyzes the initial step of the lipid cycle reactions in the biosynthesis of the cell wall peptidoglycan: transfers peptidoglycan precursor phospho-MurNAc-pentapeptide from UDP-MurNAc-pentapeptide onto the lipid carrier undecaprenyl phosphate, yielding undecaprenyl-pyrophosphoryl-MurNAc-pentapeptide, known as lipid I. This chain is Phospho-N-acetylmuramoyl-pentapeptide-transferase, found in Streptococcus thermophilus (strain ATCC BAA-250 / LMG 18311).